We begin with the raw amino-acid sequence, 250 residues long: Phosphoribosylaminoimidazole-succinocarboxamide synthase (250 aa).

This sequence belongs to the SAICAR synthetase family.

The catalysed reaction is 5-amino-1-(5-phospho-D-ribosyl)imidazole-4-carboxylate + L-aspartate + ATP = (2S)-2-[5-amino-1-(5-phospho-beta-D-ribosyl)imidazole-4-carboxamido]succinate + ADP + phosphate + 2 H(+). Its pathway is purine metabolism; IMP biosynthesis via de novo pathway; 5-amino-1-(5-phospho-D-ribosyl)imidazole-4-carboxamide from 5-amino-1-(5-phospho-D-ribosyl)imidazole-4-carboxylate: step 1/2. The sequence is that of Phosphoribosylaminoimidazole-succinocarboxamide synthase from Chloroflexus aggregans (strain MD-66 / DSM 9485).